The sequence spans 152 residues: Large ribosomal subunit protein uL22 (152 aa).

Residues 124–145 (APKKAAAKKAAPAKETTPAATE) show a composition bias toward low complexity. The disordered stretch occupies residues 124 to 152 (APKKAAAKKAAPAKETTPAATESKTEGAE).

This sequence belongs to the universal ribosomal protein uL22 family. In terms of assembly, part of the 50S ribosomal subunit.

In terms of biological role, this protein binds specifically to 23S rRNA; its binding is stimulated by other ribosomal proteins, e.g. L4, L17, and L20. It is important during the early stages of 50S assembly. It makes multiple contacts with different domains of the 23S rRNA in the assembled 50S subunit and ribosome. Its function is as follows. The globular domain of the protein is located near the polypeptide exit tunnel on the outside of the subunit, while an extended beta-hairpin is found that lines the wall of the exit tunnel in the center of the 70S ribosome. In Salinispora tropica (strain ATCC BAA-916 / DSM 44818 / JCM 13857 / NBRC 105044 / CNB-440), this protein is Large ribosomal subunit protein uL22.